Here is a 504-residue protein sequence, read N- to C-terminus: Maturase K (504 aa).

Belongs to the intron maturase 2 family. MatK subfamily.

Its subcellular location is the plastid. It localises to the chloroplast. In terms of biological role, usually encoded in the trnK tRNA gene intron. Probably assists in splicing its own and other chloroplast group II introns. The sequence is that of Maturase K from Eichhornia crassipes (Water hyacinth).